The primary structure comprises 618 residues: DNA mismatch repair protein MutL (618 aa).

A disordered region spans residues 371–401 (AREPATPRYSGGASGGSGGRQSVGGWSHAQP). Residues 382–392 (GASGGSGGRQS) show a composition bias toward gly residues.

The protein belongs to the DNA mismatch repair MutL/HexB family.

Functionally, this protein is involved in the repair of mismatches in DNA. It is required for dam-dependent methyl-directed DNA mismatch repair. May act as a 'molecular matchmaker', a protein that promotes the formation of a stable complex between two or more DNA-binding proteins in an ATP-dependent manner without itself being part of a final effector complex. This is DNA mismatch repair protein MutL from Salmonella arizonae (strain ATCC BAA-731 / CDC346-86 / RSK2980).